A 146-amino-acid polypeptide reads, in one-letter code: Large ribosomal subunit protein uL15 (146 aa).

The segment at methionine 1 to proline 65 is disordered. The segment covering arginine 24 to alanine 34 has biased composition (gly residues).

The protein belongs to the universal ribosomal protein uL15 family. In terms of assembly, part of the 50S ribosomal subunit.

In terms of biological role, binds to the 23S rRNA. This is Large ribosomal subunit protein uL15 from Bordetella parapertussis (strain 12822 / ATCC BAA-587 / NCTC 13253).